The sequence spans 206 residues: 2,3-bisphosphoglycerate-dependent phosphoglycerate mutase (206 aa).

Substrate contacts are provided by residues 9-16 (RHGQSEWN), 22-23 (TG), arginine 61, 88-91 (ERDY), lysine 99, 115-116 (RR), and 159-160 (GN). Histidine 10 serves as the catalytic Tele-phosphohistidine intermediate. The active-site Proton donor/acceptor is glutamate 88.

The protein belongs to the phosphoglycerate mutase family. BPG-dependent PGAM subfamily. In terms of assembly, homodimer.

It carries out the reaction (2R)-2-phosphoglycerate = (2R)-3-phosphoglycerate. The protein operates within carbohydrate degradation; glycolysis; pyruvate from D-glyceraldehyde 3-phosphate: step 3/5. In terms of biological role, catalyzes the interconversion of 2-phosphoglycerate and 3-phosphoglycerate. The protein is 2,3-bisphosphoglycerate-dependent phosphoglycerate mutase of Brucella abortus (strain S19).